Consider the following 157-residue polypeptide: Protein Smg homolog (157 aa).

Belongs to the Smg family.

The protein is Protein Smg homolog of Aliivibrio fischeri (strain MJ11) (Vibrio fischeri).